The sequence spans 382 residues: MVSKPHGGKLVERVAKGKTRERLVEEAKEMVNVQVDEGLAADVANVAHGVYSPLEGFMVREDYLSVLEFMRLSNDLPWTIPIILDVDENVKKSVREGDEVAIFFKGKPIAILYVEEIFPWDKNYHTLKVFKTDDLNHPGVRKVFNKKDYLLGGPLIQISDVPEPFEKYRLWPKETRVLFEQKGWKRVAAFQTRNVPHLGHEYVQKAALTFTDGLFVNPLVGWKKPGDFRDEVIIKAYEALIEHYYPKDSVAFSVLRMEMRYAGPREAVHHAIVRKNFGATHFIVGRDHAGVGNYYGPYEAWDIFKNFPDLGITPLFVREAFYCKKCGGMVNEKICPHPEEYRIRISGTKLRKMIMEGKRPPEYMMRPEVAEVVLSFEDPFVH.

The protein belongs to the sulfate adenylyltransferase family.

The catalysed reaction is sulfate + ATP + H(+) = adenosine 5'-phosphosulfate + diphosphate. Its pathway is sulfur metabolism; hydrogen sulfide biosynthesis; sulfite from sulfate: step 1/3. The sequence is that of Sulfate adenylyltransferase from Ignicoccus hospitalis (strain KIN4/I / DSM 18386 / JCM 14125).